The sequence spans 122 residues: Large ribosomal subunit protein uL24 (122 aa).

The tract at residues 43–64 (IRKHHRRDMPTPQGGTTKGGII) is disordered.

Belongs to the universal ribosomal protein uL24 family. Part of the 50S ribosomal subunit.

Its function is as follows. One of two assembly initiator proteins, it binds directly to the 5'-end of the 23S rRNA, where it nucleates assembly of the 50S subunit. One of the proteins that surrounds the polypeptide exit tunnel on the outside of the subunit. This chain is Large ribosomal subunit protein uL24, found in Cutibacterium acnes (strain DSM 16379 / KPA171202) (Propionibacterium acnes).